Reading from the N-terminus, the 498-residue chain is ATP synthase subunit beta, chloroplastic (498 aa).

Position 172 to 179 (172 to 179) interacts with ATP; that stretch reads GGAGVGKT.

Belongs to the ATPase alpha/beta chains family. As to quaternary structure, F-type ATPases have 2 components, CF(1) - the catalytic core - and CF(0) - the membrane proton channel. CF(1) has five subunits: alpha(3), beta(3), gamma(1), delta(1), epsilon(1). CF(0) has four main subunits: a(1), b(1), b'(1) and c(9-12).

The protein localises to the plastid. Its subcellular location is the chloroplast thylakoid membrane. It catalyses the reaction ATP + H2O + 4 H(+)(in) = ADP + phosphate + 5 H(+)(out). Produces ATP from ADP in the presence of a proton gradient across the membrane. The catalytic sites are hosted primarily by the beta subunits. This chain is ATP synthase subunit beta, chloroplastic, found in Brasenia schreberi (Water shield).